The sequence spans 262 residues: Phosphatidylserine decarboxylase proenzyme (262 aa).

Residues Asp86, His142, and Ser226 each act as charge relay system; for autoendoproteolytic cleavage activity in the active site. Residue Ser226 is the Schiff-base intermediate with substrate; via pyruvic acid; for decarboxylase activity of the active site. Ser226 bears the Pyruvic acid (Ser); by autocatalysis mark.

It belongs to the phosphatidylserine decarboxylase family. PSD-B subfamily. Prokaryotic type I sub-subfamily. In terms of assembly, heterodimer of a large membrane-associated beta subunit and a small pyruvoyl-containing alpha subunit. Pyruvate is required as a cofactor. Post-translationally, is synthesized initially as an inactive proenzyme. Formation of the active enzyme involves a self-maturation process in which the active site pyruvoyl group is generated from an internal serine residue via an autocatalytic post-translational modification. Two non-identical subunits are generated from the proenzyme in this reaction, and the pyruvate is formed at the N-terminus of the alpha chain, which is derived from the carboxyl end of the proenzyme. The autoendoproteolytic cleavage occurs by a canonical serine protease mechanism, in which the side chain hydroxyl group of the serine supplies its oxygen atom to form the C-terminus of the beta chain, while the remainder of the serine residue undergoes an oxidative deamination to produce ammonia and the pyruvoyl prosthetic group on the alpha chain. During this reaction, the Ser that is part of the protease active site of the proenzyme becomes the pyruvoyl prosthetic group, which constitutes an essential element of the active site of the mature decarboxylase.

The protein resides in the cell membrane. It catalyses the reaction a 1,2-diacyl-sn-glycero-3-phospho-L-serine + H(+) = a 1,2-diacyl-sn-glycero-3-phosphoethanolamine + CO2. The protein operates within phospholipid metabolism; phosphatidylethanolamine biosynthesis; phosphatidylethanolamine from CDP-diacylglycerol: step 2/2. In terms of biological role, catalyzes the formation of phosphatidylethanolamine (PtdEtn) from phosphatidylserine (PtdSer). This is Phosphatidylserine decarboxylase proenzyme from Bacillus mycoides (strain KBAB4) (Bacillus weihenstephanensis).